The sequence spans 472 residues: Threonine synthase-like 2 (472 aa).

N6-(pyridoxal phosphate)lysine is present on Lys-113.

This sequence belongs to the threonine synthase family. Requires pyridoxal 5'-phosphate as cofactor.

In terms of biological role, acts as a catabolic phospho-lyase on both gamma- and beta-phosphorylated substrates. Degrades O-phospho-threonine (PThr) to alpha-ketobutyrate, ammonia and phosphate. The protein is Threonine synthase-like 2 (thnsl2) of Xenopus laevis (African clawed frog).